We begin with the raw amino-acid sequence, 253 residues long: A-type ATP synthase subunit B (253 aa).

Belongs to the ATPase alpha/beta chains family. Has multiple subunits with at least A(3), B(3), C, D, E, F, H, I and proteolipid K(x).

It is found in the cell membrane. Component of the A-type ATP synthase that produces ATP from ADP in the presence of a proton gradient across the membrane. The B chain is a regulatory subunit. The polypeptide is A-type ATP synthase subunit B (Methanothermococcus thermolithotrophicus (Methanococcus thermolithotrophicus)).